A 435-amino-acid chain; its full sequence is Actin-like protein 7A (435 aa).

The segment at 1–64 (MWAPPAAIMG…TESKAAKERP (64 aa)) is disordered. The segment covering 20–31 (QAPLQTQALQTA) has biased composition (low complexity). Residues 31–51 (ASLRDGPAKRAVWVRHTSSEP) are required for interaction with TES. Basic and acidic residues predominate over residues 55–64 (TESKAAKERP).

The protein belongs to the actin family. As to quaternary structure, interacts (via N-terminus) with TES (via LIM domain 2). Heterodimer with TES; the heterodimer interacts with ENAH to form a heterotrimer. Interacts with ACTL9. Interacts with CYLC1; the interaction may be relevant for proper acrosome attachment to the nuclear envelope. As to expression, strongly expressed in testis. Also expressed in other tissues.

The protein localises to the cytoplasm. It localises to the cytoskeleton. Its subcellular location is the golgi apparatus. The protein resides in the nucleus. It is found in the cytoplasmic vesicle. The protein localises to the secretory vesicle. It localises to the acrosome. Essential for normal spermatogenesis and male fertility. Required for normal sperm head morphology, acroplaxome formation, acrosome attachment, and acrosome granule stability. May anchor and stabilize acrosomal adherence to the acroplaxome at least in part by facilitating the presence of F-actin in the subacrosomal space. May play an important role in formation and fusion of Golgi-derived vesicles during acrosome biogenesis. This is Actin-like protein 7A (ACTL7A) from Homo sapiens (Human).